The chain runs to 153 residues: Ribosome maturation factor RimP (153 aa).

The protein belongs to the RimP family.

It is found in the cytoplasm. Functionally, required for maturation of 30S ribosomal subunits. The polypeptide is Ribosome maturation factor RimP (Clostridium botulinum (strain Okra / Type B1)).